Here is an 83-residue protein sequence, read N- to C-terminus: Kunitz-type serine protease inhibitor blackelin-2 (83 aa).

The first 24 residues, 1-24 (MSSGGLLLLLGLLTLWEGLTPVSS), serve as a signal peptide directing secretion. The BPTI/Kunitz inhibitor domain maps to 31–81 (CELPDDRGPCRGIFHAFYYNPDQRQCLEFIYGGCYGNANNFKTIDECKRTC). 3 cysteine pairs are disulfide-bonded: C31/C81, C40/C64, and C56/C77.

It belongs to the venom Kunitz-type family. As to expression, expressed by the venom gland.

It is found in the secreted. Serine protease inhibitor. The sequence is that of Kunitz-type serine protease inhibitor blackelin-2 from Pseudechis porphyriacus (Red-bellied black snake).